Reading from the N-terminus, the 194-residue chain is dITP/XTP pyrophosphatase (194 aa).

8–13 (TGNPGK) is a binding site for substrate. 2 residues coordinate Mg(2+): Glu-38 and Asp-67. Asp-67 serves as the catalytic Proton acceptor. Substrate contacts are provided by residues Ser-68, 146-149 (FGYD), Lys-169, and 174-175 (HR).

This sequence belongs to the HAM1 NTPase family. As to quaternary structure, homodimer. Requires Mg(2+) as cofactor.

It catalyses the reaction XTP + H2O = XMP + diphosphate + H(+). It carries out the reaction dITP + H2O = dIMP + diphosphate + H(+). The enzyme catalyses ITP + H2O = IMP + diphosphate + H(+). Functionally, pyrophosphatase that catalyzes the hydrolysis of nucleoside triphosphates to their monophosphate derivatives, with a high preference for the non-canonical purine nucleotides XTP (xanthosine triphosphate), dITP (deoxyinosine triphosphate) and ITP. Seems to function as a house-cleaning enzyme that removes non-canonical purine nucleotides from the nucleotide pool, thus preventing their incorporation into DNA/RNA and avoiding chromosomal lesions. This Synechocystis sp. (strain ATCC 27184 / PCC 6803 / Kazusa) protein is dITP/XTP pyrophosphatase.